The primary structure comprises 543 residues: Chaperonin GroEL 1 (543 aa).

Residues 29–32 (TLGP), 86–90 (DGTTT), Gly413, 479–481 (NAA), and Asp495 contribute to the ATP site.

The protein belongs to the chaperonin (HSP60) family. As to quaternary structure, forms a cylinder of 14 subunits composed of two heptameric rings stacked back-to-back. Interacts with the co-chaperonin GroES.

The protein localises to the cytoplasm. It catalyses the reaction ATP + H2O + a folded polypeptide = ADP + phosphate + an unfolded polypeptide.. In terms of biological role, together with its co-chaperonin GroES, plays an essential role in assisting protein folding. The GroEL-GroES system forms a nano-cage that allows encapsulation of the non-native substrate proteins and provides a physical environment optimized to promote and accelerate protein folding. The sequence is that of Chaperonin GroEL 1 from Prochlorococcus marinus (strain NATL2A).